The following is a 92-amino-acid chain: mRNA interferase toxin YafQ (92 aa).

The active-site Proton donor is the H87.

Belongs to the RelE toxin family. YafQ subfamily. In terms of assembly, monomer in solution, forms a heterotetramer with antitoxin DinJ, with 2 YafQ-DinJ dimers associated via the N-terminus of the DinJ antitoxins (YafQ-(DinJ)2-YafQ).

Its function is as follows. Toxic component of a type II toxin-antitoxin (TA) system. A sequence-specific mRNA endoribonuclease that inhibits translation elongation and induces bacterial stasis. Cleavage occurs between the second and third residue of the Lys codon followed by a G or A (5'AAA(G/A)3'), is reading-frame dependent and occurs within the 5' end of most mRNAs. Ribosome-binding confers the sequence specificity and reading frame-dependence. The YafQ-DinJ heterotetramer binds the consensus sequence 5'-TTTGAGCTACA-3' in the dinJ promoter; DinJ also binds DNA but not as well as the YafQ-DinJ complex. This chain is mRNA interferase toxin YafQ (yafQ), found in Escherichia coli (strain B / BL21-DE3).